The primary structure comprises 440 residues: Transposon Ty1-LR4 Gag polyprotein (440 aa).

Composition is skewed to polar residues over residues 1 to 10 (MESQQLSQHP), 48 to 60 (TKAN…TPAS), and 127 to 152 (QSQF…GNTF). Disordered regions lie at residues 1 to 93 (MESQ…MMTQ), 126 to 173 (PQSQ…RPPP), and 352 to 440 (GSRN…PGTY). A compositionally biased stretch (low complexity) spans 153–165 (TDSSSADSDMTST). The tract at residues 299–401 (NNGIHINNKV…NSKSKTARAH (103 aa)) is RNA-binding. Over residues 402–418 (NVSTSNNSPSTDNDSIS) the composition is skewed to low complexity. The residue at position 416 (S416) is a Phosphoserine. The segment covering 419–428 (KSTTEPIQLN) has biased composition (polar residues). Residues 429–440 (NKHDLHLRPGTY) are compositionally biased toward basic and acidic residues.

Homotrimer.

It localises to the cytoplasm. Capsid protein (CA) is the structural component of the virus-like particle (VLP), forming the shell that encapsulates the retrotransposons dimeric RNA genome. The particles are assembled from trimer-clustered units and there are holes in the capsid shells that allow for the diffusion of macromolecules. CA also has nucleocapsid-like chaperone activity, promoting primer tRNA(i)-Met annealing to the multipartite primer-binding site (PBS), dimerization of Ty1 RNA and initiation of reverse transcription. The sequence is that of Transposon Ty1-LR4 Gag polyprotein (TY1A-LR4) from Saccharomyces cerevisiae (strain ATCC 204508 / S288c) (Baker's yeast).